Reading from the N-terminus, the 124-residue chain is Fluoride-specific ion channel FluC (124 aa).

A run of 4 helical transmembrane segments spans residues 4-24 (ILAIAVFGAVGCVARYLLAGG), 32-52 (AFPWGTLAVNVIGAFLIGLIM), 68-88 (GLTIGFLGGFTTFSTFSYETF), and 101-121 (LNVLASVALCLVGTWAGIMAA). Residues Gly-75 and Thr-78 each coordinate Na(+).

This sequence belongs to the fluoride channel Fluc/FEX (TC 1.A.43) family.

The protein localises to the cell inner membrane. The enzyme catalyses fluoride(in) = fluoride(out). With respect to regulation, na(+) is not transported, but it plays an essential structural role and its presence is essential for fluoride channel function. Fluoride-specific ion channel. Important for reducing fluoride concentration in the cell, thus reducing its toxicity. The chain is Fluoride-specific ion channel FluC from Geobacter sulfurreducens (strain ATCC 51573 / DSM 12127 / PCA).